A 173-amino-acid polypeptide reads, in one-letter code: CKLF-like MARVEL transmembrane domain-containing protein 8 (173 aa).

Positions 36–168 (FLRTLPGFLI…NTYFSFIAWR (133 aa)) constitute an MARVEL domain. Helical transmembrane passes span 40–60 (LPGFLIVAEIVLGLLVWTLIA), 70–90 (FGWVMFVAVFYWVLTVFFLII), 105–125 (TTVGLCFNGSAFVLYLSAAVV), and 147–167 (FFAFLVTICYAGNTYFSFIAW).

It belongs to the chemokine-like factor family. Highly expressed in liver and pancreas.

It is found in the membrane. Its subcellular location is the cytoplasm. The protein resides in the nucleus. This chain is CKLF-like MARVEL transmembrane domain-containing protein 8 (CMTM8), found in Homo sapiens (Human).